The primary structure comprises 326 residues: S-methyl-5'-thioadenosine phosphorylase (326 aa).

Phosphate-binding positions include S44, 86 to 87 (RH), and 119 to 120 (SA). Substrate is bound at residue M220. Residue T221 participates in phosphate binding. 244–246 (DYD) contacts substrate.

Belongs to the PNP/MTAP phosphorylase family. MTAP subfamily. In terms of assembly, homohexamer. Dimer of a homotrimer.

It catalyses the reaction S-methyl-5'-thioadenosine + phosphate = 5-(methylsulfanyl)-alpha-D-ribose 1-phosphate + adenine. It participates in amino-acid biosynthesis; L-methionine biosynthesis via salvage pathway; S-methyl-5-thio-alpha-D-ribose 1-phosphate from S-methyl-5'-thioadenosine (phosphorylase route): step 1/1. In terms of biological role, catalyzes the reversible phosphorylation of S-methyl-5'-thioadenosine (MTA) to adenine and 5-methylthioribose-1-phosphate. Involved in the breakdown of MTA, a major by-product of polyamine biosynthesis. Responsible for the first step in the methionine salvage pathway after MTA has been generated from S-adenosylmethionine. Has broad substrate specificity with 6-aminopurine nucleosides as preferred substrates. The polypeptide is S-methyl-5'-thioadenosine phosphorylase (Synechocystis sp. (strain PCC 6803 / GT-S)).